We begin with the raw amino-acid sequence, 381 residues long: Queuine tRNA-ribosyltransferase (381 aa).

Catalysis depends on D90, which acts as the Proton acceptor. Residues 90-94, D144, Q193, and G221 contribute to the substrate site; that span reads DSGGF. An RNA binding region spans residues 252 to 258; the sequence is GVGTPEN. D271 serves as the catalytic Nucleophile. The RNA binding; important for wobble base 34 recognition stretch occupies residues 276-280; it reads TRNAR. 4 residues coordinate Zn(2+): C309, C311, C314, and H340.

Belongs to the queuine tRNA-ribosyltransferase family. In terms of assembly, homodimer. Within each dimer, one monomer is responsible for RNA recognition and catalysis, while the other monomer binds to the replacement base PreQ1. It depends on Zn(2+) as a cofactor.

The enzyme catalyses 7-aminomethyl-7-carbaguanine + guanosine(34) in tRNA = 7-aminomethyl-7-carbaguanosine(34) in tRNA + guanine. It participates in tRNA modification; tRNA-queuosine biosynthesis. Catalyzes the base-exchange of a guanine (G) residue with the queuine precursor 7-aminomethyl-7-deazaguanine (PreQ1) at position 34 (anticodon wobble position) in tRNAs with GU(N) anticodons (tRNA-Asp, -Asn, -His and -Tyr). Catalysis occurs through a double-displacement mechanism. The nucleophile active site attacks the C1' of nucleotide 34 to detach the guanine base from the RNA, forming a covalent enzyme-RNA intermediate. The proton acceptor active site deprotonates the incoming PreQ1, allowing a nucleophilic attack on the C1' of the ribose to form the product. After dissociation, two additional enzymatic reactions on the tRNA convert PreQ1 to queuine (Q), resulting in the hypermodified nucleoside queuosine (7-(((4,5-cis-dihydroxy-2-cyclopenten-1-yl)amino)methyl)-7-deazaguanosine). The polypeptide is Queuine tRNA-ribosyltransferase (Helicobacter hepaticus (strain ATCC 51449 / 3B1)).